The chain runs to 613 residues: Dihydroxy-acid dehydratase (613 aa).

Asp81 contacts Mg(2+). Cys122 contacts [2Fe-2S] cluster. Residues Asp123 and Lys124 each coordinate Mg(2+). Lys124 is subject to N6-carboxylysine. Residue Cys193 participates in [2Fe-2S] cluster binding. A Mg(2+)-binding site is contributed by Glu489. Residue Ser515 is the Proton acceptor of the active site.

This sequence belongs to the IlvD/Edd family. As to quaternary structure, homodimer. Requires [2Fe-2S] cluster as cofactor. Mg(2+) is required as a cofactor.

It catalyses the reaction (2R)-2,3-dihydroxy-3-methylbutanoate = 3-methyl-2-oxobutanoate + H2O. The enzyme catalyses (2R,3R)-2,3-dihydroxy-3-methylpentanoate = (S)-3-methyl-2-oxopentanoate + H2O. It participates in amino-acid biosynthesis; L-isoleucine biosynthesis; L-isoleucine from 2-oxobutanoate: step 3/4. The protein operates within amino-acid biosynthesis; L-valine biosynthesis; L-valine from pyruvate: step 3/4. Its function is as follows. Functions in the biosynthesis of branched-chain amino acids. Catalyzes the dehydration of (2R,3R)-2,3-dihydroxy-3-methylpentanoate (2,3-dihydroxy-3-methylvalerate) into 2-oxo-3-methylpentanoate (2-oxo-3-methylvalerate) and of (2R)-2,3-dihydroxy-3-methylbutanoate (2,3-dihydroxyisovalerate) into 2-oxo-3-methylbutanoate (2-oxoisovalerate), the penultimate precursor to L-isoleucine and L-valine, respectively. The polypeptide is Dihydroxy-acid dehydratase (Pseudomonas putida (strain W619)).